The chain runs to 429 residues: MGGEVLNNEGMPLAELKQETIPISRSESSESLNSLTSTRSSSSNRPKTYFCDYDGCDKAFTRPSILTEHQLSVHQGLRAFQCDKCAKSFVKKSHLERHLYTHSDTKPFQCSYCGKGVTTRQQLKRHEVTHTKSFICPEEGCNLRFYKHPQLRAHILSVHLHKLTCPHCNKSFQRPYRLRNHISKHHDPEVENPYQCTFAGCCKEFRIWSQLQSHIKNDHPKLKCPICSKPCVGENGLQMHMIIHDDSLVTKNWKCHICPDMSFSRKHDLLTHYGSIHTEEDIPLELKYKISDIQQLVQDHGVQLGNSKHSNEQDEEKISNRLRKRRKLTENNNVEFLQNEVDLEKRLESGENGLNLLLNTVGRKYRCFYNNCSRTFKTKEKYEKHIDKHKVHELKLKILQEKEENKTLVDQNHKEPFIIQKETQSAGDK.

Residues 1 to 45 (MGGEVLNNEGMPLAELKQETIPISRSESSESLNSLTSTRSSSSNR) form a disordered region. Low complexity predominate over residues 24 to 44 (SRSESSESLNSLTSTRSSSSN). 9 C2H2-type zinc fingers span residues 49-74 (YFCD…LSVH), 80-102 (FQCD…LYTH), 108-130 (FQCS…EVTH), 134-159 (FICP…LSVH), 163-186 (LTCP…SKHH), 194-219 (YQCT…KNDH), 222-244 (LKCP…MIIH), 253-277 (WKCH…GSIH), and 365-389 (YRCF…IDKH). Residues 406-416 (KTLVDQNHKEP) are compositionally biased toward basic and acidic residues. A disordered region spans residues 406-429 (KTLVDQNHKEPFIIQKETQSAGDK).

It localises to the nucleus. Functionally, interacts with the internal control region (ICR) of approximately 50 bases within the 5S RNA genes, is required for correct transcription of these genes by RNA polymerase III. Also binds the transcribed 5S RNA's. The protein is Transcription factor IIIA (PZF1) of Saccharomyces cerevisiae (strain ATCC 204508 / S288c) (Baker's yeast).